The sequence spans 167 residues: L-alanine exporter AlaE (167 aa).

A run of 4 helical transmembrane segments spans residues 25–45 (GTEF…TGII), 50–70 (IAGM…ALMI), 105–125 (FQVP…GGLV), and 129–149 (LGAA…LNWV).

It belongs to the AlaE exporter family.

Its subcellular location is the cell inner membrane. Its function is as follows. Exports L-alanine. This chain is L-alanine exporter AlaE, found in Pantoea sp. (strain At-9b).